The primary structure comprises 98 residues: NADH-ubiquinone oxidoreductase chain 4L (98 aa).

Helical transmembrane passes span M1–F21, L26–T46, and I58–L78.

The protein belongs to the complex I subunit 4L family.

It is found in the mitochondrion membrane. It catalyses the reaction a ubiquinone + NADH + 5 H(+)(in) = a ubiquinol + NAD(+) + 4 H(+)(out). Core subunit of the mitochondrial membrane respiratory chain NADH dehydrogenase (Complex I) which catalyzes electron transfer from NADH through the respiratory chain, using ubiquinone as an electron acceptor. Part of the enzyme membrane arm which is embedded in the lipid bilayer and involved in proton translocation. This chain is NADH-ubiquinone oxidoreductase chain 4L (MT-ND4L), found in Scyliorhinus canicula (Small-spotted catshark).